Reading from the N-terminus, the 346-residue chain is UDP-3-O-acylglucosamine N-acyltransferase (346 aa).

His240 serves as the catalytic Proton acceptor.

The protein belongs to the transferase hexapeptide repeat family. LpxD subfamily. In terms of assembly, homotrimer.

It catalyses the reaction a UDP-3-O-[(3R)-3-hydroxyacyl]-alpha-D-glucosamine + a (3R)-hydroxyacyl-[ACP] = a UDP-2-N,3-O-bis[(3R)-3-hydroxyacyl]-alpha-D-glucosamine + holo-[ACP] + H(+). It participates in bacterial outer membrane biogenesis; LPS lipid A biosynthesis. Functionally, catalyzes the N-acylation of UDP-3-O-acylglucosamine using 3-hydroxyacyl-ACP as the acyl donor. Is involved in the biosynthesis of lipid A, a phosphorylated glycolipid that anchors the lipopolysaccharide to the outer membrane of the cell. This Phocaeicola vulgatus (strain ATCC 8482 / DSM 1447 / JCM 5826 / CCUG 4940 / NBRC 14291 / NCTC 11154) (Bacteroides vulgatus) protein is UDP-3-O-acylglucosamine N-acyltransferase.